The chain runs to 209 residues: Thiamine-phosphate synthase 1 (209 aa).

4-amino-2-methyl-5-(diphosphooxymethyl)pyrimidine is bound by residues 39-43 and Asn-74; that span reads QFREK. Residues Asp-75 and Asp-94 each contribute to the Mg(2+) site. Ser-112 provides a ligand contact to 4-amino-2-methyl-5-(diphosphooxymethyl)pyrimidine. A 2-[(2R,5Z)-2-carboxy-4-methylthiazol-5(2H)-ylidene]ethyl phosphate-binding site is contributed by 138–140; the sequence is TQS. Position 141 (Lys-141) interacts with 4-amino-2-methyl-5-(diphosphooxymethyl)pyrimidine. 2-[(2R,5Z)-2-carboxy-4-methylthiazol-5(2H)-ylidene]ethyl phosphate-binding positions include Gly-170 and 190–191; that span reads IS.

Belongs to the thiamine-phosphate synthase family. It depends on Mg(2+) as a cofactor.

It carries out the reaction 2-[(2R,5Z)-2-carboxy-4-methylthiazol-5(2H)-ylidene]ethyl phosphate + 4-amino-2-methyl-5-(diphosphooxymethyl)pyrimidine + 2 H(+) = thiamine phosphate + CO2 + diphosphate. It catalyses the reaction 2-(2-carboxy-4-methylthiazol-5-yl)ethyl phosphate + 4-amino-2-methyl-5-(diphosphooxymethyl)pyrimidine + 2 H(+) = thiamine phosphate + CO2 + diphosphate. The enzyme catalyses 4-methyl-5-(2-phosphooxyethyl)-thiazole + 4-amino-2-methyl-5-(diphosphooxymethyl)pyrimidine + H(+) = thiamine phosphate + diphosphate. Its pathway is cofactor biosynthesis; thiamine diphosphate biosynthesis; thiamine phosphate from 4-amino-2-methyl-5-diphosphomethylpyrimidine and 4-methyl-5-(2-phosphoethyl)-thiazole: step 1/1. Functionally, condenses 4-methyl-5-(beta-hydroxyethyl)thiazole monophosphate (THZ-P) and 2-methyl-4-amino-5-hydroxymethyl pyrimidine pyrophosphate (HMP-PP) to form thiamine monophosphate (TMP). The sequence is that of Thiamine-phosphate synthase 1 from Streptococcus pneumoniae serotype 4 (strain ATCC BAA-334 / TIGR4).